We begin with the raw amino-acid sequence, 234 residues long: Glucosamine-6-phosphate deaminase (234 aa).

Asp-63 (proton acceptor; for enolization step) is an active-site residue. Catalysis depends on Asn-129, which acts as the For ring-opening step. His-131 (proton acceptor; for ring-opening step) is an active-site residue. Glu-136 acts as the For ring-opening step in catalysis.

This sequence belongs to the glucosamine/galactosamine-6-phosphate isomerase family. NagB subfamily.

The enzyme catalyses alpha-D-glucosamine 6-phosphate + H2O = beta-D-fructose 6-phosphate + NH4(+). It participates in amino-sugar metabolism; N-acetylneuraminate degradation; D-fructose 6-phosphate from N-acetylneuraminate: step 5/5. Its function is as follows. Catalyzes the reversible isomerization-deamination of glucosamine 6-phosphate (GlcN6P) to form fructose 6-phosphate (Fru6P) and ammonium ion. The polypeptide is Glucosamine-6-phosphate deaminase (Listeria monocytogenes serotype 4a (strain HCC23)).